The sequence spans 226 residues: Ribonuclease 3 (226 aa).

In terms of domain architecture, RNase III spans 2–129 (IESISKIIKY…LIGAIYLDGG (128 aa)). Residue E42 coordinates Mg(2+). The active site involves D46. Mg(2+)-binding residues include N115 and E118. E118 is a catalytic residue. The region spanning 154–223 (DAKTILQELV…ASLMLNQIHN (70 aa)) is the DRBM domain.

Belongs to the ribonuclease III family. In terms of assembly, homodimer. Mg(2+) serves as cofactor.

The protein localises to the cytoplasm. The catalysed reaction is Endonucleolytic cleavage to 5'-phosphomonoester.. Functionally, digests double-stranded RNA. Involved in the processing of primary rRNA transcript to yield the immediate precursors to the large and small rRNAs (23S and 16S). Processes some mRNAs, and tRNAs when they are encoded in the rRNA operon. Processes pre-crRNA and tracrRNA of type II CRISPR loci if present in the organism. The polypeptide is Ribonuclease 3 (Ehrlichia chaffeensis (strain ATCC CRL-10679 / Arkansas)).